The sequence spans 210 residues: MSSLENQLLIAMPSLGDPYFNKTVTYICEHNEDGAMGLIINLPVNITLADLLKQIEPDEGDKTGNVNSNSELTKSDDVNDITLVTDITNSLEQLVLAGGPIAQQRGFVLHSSQPGWSSSLVLSKELMITTSKDILMALGTQQAPEQFIVTLGYAGWGPGQLEQELQANSWLTTPADIEILFKTPIEQRWKKATEKLGIDLAHLSTDIGHA.

This sequence belongs to the UPF0301 (AlgH) family.

This Colwellia psychrerythraea (strain 34H / ATCC BAA-681) (Vibrio psychroerythus) protein is UPF0301 protein CPS_1252.